The chain runs to 421 residues: 3-phosphoshikimate 1-carboxyvinyltransferase (421 aa).

Residues Lys19, Ser20, and Arg24 each contribute to the 3-phosphoshikimate site. Lys19 is a phosphoenolpyruvate binding site. Positions 88 and 116 each coordinate phosphoenolpyruvate. Positions 160, 162, 307, and 334 each coordinate 3-phosphoshikimate. Residue Gln162 coordinates phosphoenolpyruvate. Residue Asp307 is the Proton acceptor of the active site. Arg338 and Arg380 together coordinate phosphoenolpyruvate.

This sequence belongs to the EPSP synthase family. Monomer.

It localises to the cytoplasm. The enzyme catalyses 3-phosphoshikimate + phosphoenolpyruvate = 5-O-(1-carboxyvinyl)-3-phosphoshikimate + phosphate. The protein operates within metabolic intermediate biosynthesis; chorismate biosynthesis; chorismate from D-erythrose 4-phosphate and phosphoenolpyruvate: step 6/7. In terms of biological role, catalyzes the transfer of the enolpyruvyl moiety of phosphoenolpyruvate (PEP) to the 5-hydroxyl of shikimate-3-phosphate (S3P) to produce enolpyruvyl shikimate-3-phosphate and inorganic phosphate. This chain is 3-phosphoshikimate 1-carboxyvinyltransferase, found in Thermotoga neapolitana (strain ATCC 49049 / DSM 4359 / NBRC 107923 / NS-E).